The following is a 699-amino-acid chain: Elongation factor G (699 aa).

The tr-type G domain occupies 8–283; the sequence is EHIRNIGICA…AVVDFLPSPI (276 aa). GTP-binding positions include 17-24, 81-85, and 135-138; these read AHIDAGKT, DTPGH, and NKMD.

It belongs to the TRAFAC class translation factor GTPase superfamily. Classic translation factor GTPase family. EF-G/EF-2 subfamily.

The protein localises to the cytoplasm. Its function is as follows. Catalyzes the GTP-dependent ribosomal translocation step during translation elongation. During this step, the ribosome changes from the pre-translocational (PRE) to the post-translocational (POST) state as the newly formed A-site-bound peptidyl-tRNA and P-site-bound deacylated tRNA move to the P and E sites, respectively. Catalyzes the coordinated movement of the two tRNA molecules, the mRNA and conformational changes in the ribosome. This chain is Elongation factor G, found in Rickettsia parkeri.